A 337-amino-acid polypeptide reads, in one-letter code: Ornithine carbamoyltransferase, catabolic (337 aa).

Residues 58–61 (STRT), glutamine 85, arginine 109, and 135–138 (HPTQ) contribute to the carbamoyl phosphate site. Residues asparagine 167, aspartate 231, and 235–236 (SM) contribute to the L-ornithine site. Carbamoyl phosphate is bound by residues 272-273 (CL) and arginine 317.

Belongs to the aspartate/ornithine carbamoyltransferase superfamily. OTCase family.

The protein resides in the cytoplasm. The enzyme catalyses carbamoyl phosphate + L-ornithine = L-citrulline + phosphate + H(+). The protein operates within amino-acid degradation; L-arginine degradation via ADI pathway; carbamoyl phosphate from L-arginine: step 2/2. Functionally, reversibly catalyzes the transfer of the carbamoyl group from carbamoyl phosphate (CP) to the N(epsilon) atom of ornithine (ORN) to produce L-citrulline. The chain is Ornithine carbamoyltransferase, catabolic (arcB) from Latilactobacillus sakei (Lactobacillus sakei).